The primary structure comprises 267 residues: Elsinochrome reductase 1 (267 aa).

Isoleucine 26, aspartate 72, asparagine 99, and arginine 132 together coordinate NADP(+). Serine 149 (proton donor) is an active-site residue. NADP(+)-binding residues include tyrosine 163, lysine 167, isoleucine 196, and threonine 198. The active-site Proton acceptor is the tyrosine 163. The active-site Lowers pKa of active site Tyr is lysine 167.

This sequence belongs to the short-chain dehydrogenases/reductases (SDR) family.

Reductase; part of the gene cluster that mediates the biosynthesis of elsinochromes, pigments consisting of at least four interconvertible tautomers (A, B, C and D) that have a core phenolic quinone to which various side chains are attached and which play an important role in fungal pathogenesis. The non-reducing polyketide synthase PKS1 was proposed to iteratively catalyze decarboxylation between acetyl-CoA and malonyl-CoA subunits for polyketide chain elongation. The released polyketide undergoes cyclization to form an aromatic ring, and proceeds via serial modification steps to produce the heptaketide back- bone of elsinochrome. As elsinochrome has a symmetrical structure, two identical heptaketides are fused to form a core 1,2-dihydrobenzo-perylene ring structure, which can then be successively modified to produce the various derivatives of elsinochrome. Some of these reactions may be cooperatively carried out, at least in part, by the products of RDT1, OXR1 and PKS1. PRF1, embedded within the elsinochrome cluster possibly functions to stabilize some of the biosynthetic enzymes required for elsinochrome production. As prefoldin is a hexamer containing 2 a and 4 b subunits, additional prefoldin subunits, whose coding genes may not immediately link to the elsinochrome biosynthetic gene cluster, are required to fulfill the chaperone function. In addition, no methyltransferase-coding gene exists within the biosynthetic gene cluster, even though elsinochrome has four methyl groups at positions C3, C7, C8 and C12. Apparently, the identified gene cluster does not contain the entire entourage of genes responsible for elsinochrome biosynthesis. Once elsinochrome is synthesized, it must be exported outside the fungal cells, which is probably accomplished by the ECT1 transporter, to avoid toxicity. This chain is Elsinochrome reductase 1, found in Elsinoe fawcettii (Citrus scab fungus).